A 174-amino-acid chain; its full sequence is Large ribosomal subunit protein uL16 (174 aa).

It belongs to the universal ribosomal protein uL16 family.

In Archaeoglobus fulgidus (strain ATCC 49558 / DSM 4304 / JCM 9628 / NBRC 100126 / VC-16), this protein is Large ribosomal subunit protein uL16.